Here is a 201-residue protein sequence, read N- to C-terminus: dITP/XTP pyrophosphatase (201 aa).

Substrate is bound at residue 8–13 (TNNENK). Residues Glu41 and Asp73 each coordinate Mg(2+). The active-site Proton acceptor is Asp73. Residues Ser74, 154 to 157 (FGYD), Lys177, and 182 to 183 (HR) contribute to the substrate site.

Belongs to the HAM1 NTPase family. In terms of assembly, homodimer. Requires Mg(2+) as cofactor.

The catalysed reaction is XTP + H2O = XMP + diphosphate + H(+). The enzyme catalyses dITP + H2O = dIMP + diphosphate + H(+). It catalyses the reaction ITP + H2O = IMP + diphosphate + H(+). Pyrophosphatase that catalyzes the hydrolysis of nucleoside triphosphates to their monophosphate derivatives, with a high preference for the non-canonical purine nucleotides XTP (xanthosine triphosphate), dITP (deoxyinosine triphosphate) and ITP. Seems to function as a house-cleaning enzyme that removes non-canonical purine nucleotides from the nucleotide pool, thus preventing their incorporation into DNA/RNA and avoiding chromosomal lesions. The polypeptide is dITP/XTP pyrophosphatase (Clostridium tetani (strain Massachusetts / E88)).